A 416-amino-acid chain; its full sequence is Serine hydroxymethyltransferase (416 aa).

(6S)-5,6,7,8-tetrahydrofolate is bound by residues Leu121 and 125 to 127 (GHL). Lys229 carries the post-translational modification N6-(pyridoxal phosphate)lysine.

This sequence belongs to the SHMT family. As to quaternary structure, homodimer. Pyridoxal 5'-phosphate serves as cofactor.

It is found in the cytoplasm. The catalysed reaction is (6R)-5,10-methylene-5,6,7,8-tetrahydrofolate + glycine + H2O = (6S)-5,6,7,8-tetrahydrofolate + L-serine. It participates in one-carbon metabolism; tetrahydrofolate interconversion. The protein operates within amino-acid biosynthesis; glycine biosynthesis; glycine from L-serine: step 1/1. Functionally, catalyzes the reversible interconversion of serine and glycine with tetrahydrofolate (THF) serving as the one-carbon carrier. This reaction serves as the major source of one-carbon groups required for the biosynthesis of purines, thymidylate, methionine, and other important biomolecules. Also exhibits THF-independent aldolase activity toward beta-hydroxyamino acids, producing glycine and aldehydes, via a retro-aldol mechanism. The polypeptide is Serine hydroxymethyltransferase (Neisseria meningitidis serogroup B (strain ATCC BAA-335 / MC58)).